The following is a 96-amino-acid chain: Nucleoid-associated protein CT_335 (96 aa).

The protein belongs to the YbaB/EbfC family. In terms of assembly, homodimer.

The protein resides in the cytoplasm. Its subcellular location is the nucleoid. Its function is as follows. Binds to DNA and alters its conformation. May be involved in regulation of gene expression, nucleoid organization and DNA protection. This Chlamydia trachomatis serovar D (strain ATCC VR-885 / DSM 19411 / UW-3/Cx) protein is Nucleoid-associated protein CT_335.